Reading from the N-terminus, the 248-residue chain is MNVLISNDDGYLSEGIAVLARVTAEFANVRVVAPERDRSGVSNSLTLERPLQLKQAQNGFYYVNGTPTDCIHIGQSVFSDFQADFVFSGINRGANMGDDTLYSGTVAAATEAYLMGIPAVAFSLNDASGRYWATAEQALWTLLAHFFKNPPQSPILWNINIPAVAPEDVRGIKIARLGRRHHGQNVIPARNPRGEQIYWIGPVGEVSDREEGTDFGECGAGFITVTPLQIDLTAYPDMAETAAFWHAD.

The a divalent metal cation site is built by D8, D9, S39, and N91.

Belongs to the SurE nucleotidase family. The cofactor is a divalent metal cation.

Its subcellular location is the cytoplasm. The catalysed reaction is a ribonucleoside 5'-phosphate + H2O = a ribonucleoside + phosphate. Functionally, nucleotidase that shows phosphatase activity on nucleoside 5'-monophosphates. This chain is 5'-nucleotidase SurE, found in Neisseria meningitidis serogroup B (strain ATCC BAA-335 / MC58).